A 1102-amino-acid polypeptide reads, in one-letter code: Phosphatidylinositol 4,5-bisphosphate 3-kinase catalytic subunit gamma isoform (1102 aa).

Positions 34 to 141 constitute a PI3K-ABD domain; it reads SMELIPIEFV…PGQIHLVQRH (108 aa). Positions 217-309 constitute a PI3K-RBD domain; it reads NNCIFIVIHR…GEEIHVVLDT (93 aa). A C2 PI3K-type domain is found at 357-521; it reads CDRKFRVKIR…NSMSISILLD (165 aa). The region spanning 541–723 is the PIK helical domain; it reads DRVRAEMPNQ…AVILEAYLRG (183 aa). A PI3K/PI4K catalytic domain is found at 797-1080; that stretch reads AIEKCKVMAS…QIEVCRDKGW (284 aa). Positions 803-809 are G-loop; it reads VMASKKK. Residues 829–838 and 864–872 each bind ATP; these read GIIFKHGDDL and LLPYGCIST. A catalytic loop region spans residues 943 to 951; that stretch reads GIGDRHNDN. 961 to 969 is an ATP binding site; the sequence is FHIDFGHIL. The activation loop stretch occupies residues 962-988; it reads HIDFGHILGNYKSFLGINKERVPFVLT. Thr-1024 bears the Phosphothreonine; by PKA mark. The residue at position 1101 (Ser-1101) is a Phosphoserine; by autocatalysis.

The protein belongs to the PI3/PI4-kinase family. As to quaternary structure, heterodimer of a catalytic subunit PIK3CG and a PIK3R5 or PIK3R6 regulatory subunit. Interacts with GRK2 through the PIK helical domain. Interaction with GRK2 is required for targeting to agonist-occupied receptor. Interacts with PDE3B; regulates PDE3B activity and thereby cAMP levels in cells. Interacts with TPM2. Interacts with EPHA8; regulates integrin-mediated cell adhesion to substrate. Interacts with HRAS; the interaction is required for membrane recruitment and beta-gamma G protein dimer-dependent activation of the PI3K gamma complex PIK3CG:PIK3R6. In terms of processing, autophosphorylation at Ser-1101 has no effect on the phosphatidylinositol-4,5-bisphosphate 3-kinase activity. As to expression, pancreas, skeletal muscle, liver and heart.

It is found in the cytoplasm. It localises to the cell membrane. It carries out the reaction a 1,2-diacyl-sn-glycero-3-phospho-(1D-myo-inositol) + ATP = a 1,2-diacyl-sn-glycero-3-phospho-(1D-myo-inositol-3-phosphate) + ADP + H(+). The enzyme catalyses a 1,2-diacyl-sn-glycero-3-phospho-(1D-myo-inositol-4,5-bisphosphate) + ATP = a 1,2-diacyl-sn-glycero-3-phospho-(1D-myo-inositol-3,4,5-trisphosphate) + ADP + H(+). It catalyses the reaction a 1,2-diacyl-sn-glycero-3-phospho-(1D-myo-inositol 4-phosphate) + ATP = a 1,2-diacyl-sn-glycero-3-phospho-(1D-myo-inositol-3,4-bisphosphate) + ADP + H(+). The catalysed reaction is L-seryl-[protein] + ATP = O-phospho-L-seryl-[protein] + ADP + H(+). It functions in the pathway phospholipid metabolism; phosphatidylinositol phosphate biosynthesis. Its activity is regulated as follows. Activated by both the alpha and the beta-gamma G proteins following stimulation of G protein-coupled receptors (GPCRs). Activation by GPCRs is assisted by the regulatory subunits (PIK3R5 or PIK3R6) leading to the translocation from the cytosol to the plasma membrane and to kinase activation. Inhibited by AS-604850 and AS-605240. Functionally, phosphoinositide-3-kinase (PI3K) that phosphorylates PtdIns(4,5)P2 (Phosphatidylinositol 4,5-bisphosphate) to generate phosphatidylinositol 3,4,5-trisphosphate (PIP3). PIP3 plays a key role by recruiting PH domain-containing proteins to the membrane, including AKT1 and PDPK1, activating signaling cascades involved in cell growth, survival, proliferation, motility and morphology. Links G-protein coupled receptor activation to PIP3 production. Involved in immune, inflammatory and allergic responses. Modulates leukocyte chemotaxis to inflammatory sites and in response to chemoattractant agents. May control leukocyte polarization and migration by regulating the spatial accumulation of PIP3 and by regulating the organization of F-actin formation and integrin-based adhesion at the leading edge. Controls motility of dendritic cells. Together with PIK3CD is involved in natural killer (NK) cell development and migration towards the sites of inflammation. Participates in T-lymphocyte migration. Regulates T-lymphocyte proliferation, activation, and cytokine production. Together with PIK3CD participates in T-lymphocyte development. Required for B-lymphocyte development and signaling. Together with PIK3CD participates in neutrophil respiratory burst. Together with PIK3CD is involved in neutrophil chemotaxis and extravasation. Together with PIK3CB promotes platelet aggregation and thrombosis. Regulates alpha-IIb/beta-3 integrins (ITGA2B/ ITGB3) adhesive function in platelets downstream of P2Y12 through a lipid kinase activity-independent mechanism. May have also a lipid kinase activity-dependent function in platelet aggregation. Involved in endothelial progenitor cell migration. Negative regulator of cardiac contractility. Modulates cardiac contractility by anchoring protein kinase A (PKA) and PDE3B activation, reducing cAMP levels. Regulates cardiac contractility also by promoting beta-adrenergic receptor internalization by binding to GRK2 and by non-muscle tropomyosin phosphorylation. Also has serine/threonine protein kinase activity: both lipid and protein kinase activities are required for beta-adrenergic receptor endocytosis. May also have a scaffolding role in modulating cardiac contractility. Contributes to cardiac hypertrophy under pathological stress. Through simultaneous binding of PDE3B to RAPGEF3 and PIK3R6 is assembled in a signaling complex in which the PI3K gamma complex is activated by RAPGEF3 and which is involved in angiogenesis. In neutrophils, participates in a phospholipase C-activating N-formyl peptide-activated GPCR (G protein-coupled receptor) signaling pathway downstream of RASGRP4-mediated Ras-activation, to promote neutrophil functional responses. The polypeptide is Phosphatidylinositol 4,5-bisphosphate 3-kinase catalytic subunit gamma isoform (PIK3CG) (Homo sapiens (Human)).